The chain runs to 692 residues: ATPase synthesis protein 25, mitochondrial (692 aa).

A mitochondrion-targeting transit peptide spans 1 to 73; it reads MNRILSKGPR…DGNGNTHRTT (73 aa). Disordered regions lie at residues 44–83, 286–314, and 338–373; these read PRLR…HTPW, RQVS…SSDH, and CRLL…HLAA. Polar residues predominate over residues 65–81; that stretch reads GNGNTHRTTSTASSQHT. Basic and acidic residues predominate over residues 292–302; that stretch reads TKSDAPHEEVR. Positions 347–357 are enriched in acidic residues; it reads DNQDDGLDDGL.

The protein belongs to the ATP25 family.

The protein localises to the mitochondrion inner membrane. Probable mitochondrial mRNA stabilization factor. This is ATPase synthesis protein 25, mitochondrial (atp25) from Neosartorya fischeri (strain ATCC 1020 / DSM 3700 / CBS 544.65 / FGSC A1164 / JCM 1740 / NRRL 181 / WB 181) (Aspergillus fischerianus).